The sequence spans 225 residues: 7-carboxy-7-deazaguanine synthase (225 aa).

Substrate contacts are provided by residues 14–16 (LQG) and Arg29. The Radical SAM core domain occupies 20-225 (HFGKSAFFIR…LQTHKWLGVL (206 aa)). Residues Cys33, Cys37, and Cys40 each contribute to the [4Fe-4S] cluster site. Residue Thr42 participates in Mg(2+) binding. Position 77 (Thr77) interacts with substrate. S-adenosyl-L-methionine-binding positions include Gly79 and 127-129 (SPK).

Belongs to the radical SAM superfamily. 7-carboxy-7-deazaguanine synthase family. In terms of assembly, homodimer. [4Fe-4S] cluster is required as a cofactor. It depends on S-adenosyl-L-methionine as a cofactor. The cofactor is Mg(2+).

The enzyme catalyses 6-carboxy-5,6,7,8-tetrahydropterin + H(+) = 7-carboxy-7-deazaguanine + NH4(+). It participates in purine metabolism; 7-cyano-7-deazaguanine biosynthesis. Catalyzes the complex heterocyclic radical-mediated conversion of 6-carboxy-5,6,7,8-tetrahydropterin (CPH4) to 7-carboxy-7-deazaguanine (CDG), a step common to the biosynthetic pathways of all 7-deazapurine-containing compounds. This chain is 7-carboxy-7-deazaguanine synthase, found in Prochlorococcus marinus (strain SARG / CCMP1375 / SS120).